A 548-amino-acid chain; its full sequence is Multidrug efflux system permease protein Rv1217c (548 aa).

The next 12 membrane-spanning stretches (helical) occupy residues 39-59 (VSLP…YIAS), 99-119 (GIWK…LTVI), 148-168 (ALLL…LGLL), 178-198 (VAFG…AAVA), 210-230 (AVAF…DAGS), 253-273 (WWVL…AYRL), 313-333 (LLWT…VHGI), 359-379 (AFLA…AVSL), 410-430 (LAMA…AAGL), 450-470 (AAVQ…LFGL), 477-497 (VAWG…LAGF), and 521-541 (VPLL…AMAF).

In terms of assembly, the complex is probably composed of two ATP-binding proteins (Rv1218c) and a transmembrane protein (Rv1217c).

The protein localises to the cell inner membrane. Functionally, probably part of the ABC transporter complex Rv1217c-Rv1218c involved in the resistance to a wide range of structurally unrelated drugs. Probably responsible for the translocation of the substrate across the membrane. The chain is Multidrug efflux system permease protein Rv1217c from Mycobacterium tuberculosis (strain ATCC 25618 / H37Rv).